Consider the following 1184-residue polypeptide: DNA-directed RNA polymerase subunit beta (1184 aa).

The protein belongs to the RNA polymerase beta chain family. In terms of assembly, the RNAP catalytic core consists of 2 alpha, 1 beta, 1 beta' and 1 omega subunit. When a sigma factor is associated with the core the holoenzyme is formed, which can initiate transcription.

It catalyses the reaction RNA(n) + a ribonucleoside 5'-triphosphate = RNA(n+1) + diphosphate. Functionally, DNA-dependent RNA polymerase catalyzes the transcription of DNA into RNA using the four ribonucleoside triphosphates as substrates. The sequence is that of DNA-directed RNA polymerase subunit beta from Fusobacterium nucleatum subsp. nucleatum (strain ATCC 25586 / DSM 15643 / BCRC 10681 / CIP 101130 / JCM 8532 / KCTC 2640 / LMG 13131 / VPI 4355).